Reading from the N-terminus, the 7067-residue chain is Replicase polyprotein 1ab (7067 aa).

Residues 12-127 (THVQLSLPVL…YRNVLLRKNG (116 aa)) enclose the CoV Nsp1 globular domain. The BetaCoV Nsp1 C-terminal domain occupies 148–179 (ELGTDPIEDYEQNWNTKHGSGALRELTRELNG). Residues 183 to 456 (TRYVDNNFCG…NEDLLEILNR (274 aa)) enclose the CoV Nsp2 N-terminal domain. The Zn(2+) site is built by C200, C231, H234, H236, C323, C326, C341, C344, C370, C373, H382, and C416. Residues 200 to 236 (CIKDFLARAGKSMCTLSEQLDYIESKRGVYCCREHEH) form a C2H2 region. The tract at residues 323–344 (CNHCDEVSWQTCDFLKATCEQC) is C4. The interval 370-416 (CPACQDPEVGPEHSVADYHNHSNIETRLRKGGRTKCFGGCVFSYVGC) is C2HC. Residues 458–688 (RVNINIVGDF…LGVVNKALEM (231 aa)) enclose the CoV Nsp2 middle domain. Residues 690 to 818 (LDQVTIAGTK…TNNVFRLKGG (129 aa)) enclose the CoV Nsp2 C-terminal domain. One can recognise a Ubiquitin-like 1 domain in the interval 822-930 (KGVTFGEDTV…MYCSFYPPDE (109 aa)). 3 consecutive Macro domains span residues 998–1164 (VNQF…LDYL), 1201–1329 (KIKA…LPSE), and 1337–1464 (VLGT…TSSS). The 67-residue stretch at 1466–1532 (TPEEYFVETT…PLDKLKSLLS (67 aa)) folds into the DPUP domain. A Ubiquitin-like 2 domain is found at 1536–1591 (VKTIKVFTTVDNTNLHTHIVDMSMTYGQQFGPTYLDGADVTKIKPHVNHEGKTFFV). In terms of domain architecture, Peptidase C16 spans 1605 to 1869 (YYHTIDESFL…YTEIEPKLDG (265 aa)). C1645 (for PL-PRO activity) is an active-site residue. C1723, C1726, C1758, and C1760 together coordinate Zn(2+). Residues 1723-1760 (CKHCGQKTTTLKGVEAVMYMGTLSYDELKTGVSIPCVC) form a C4-type zinc finger. Catalysis depends on for PL-PRO activity residues H1806 and D1820. In terms of domain architecture, Nucleic acid-binding spans 1882–1992 (PIDLVPTQPM…CLWSTKPVDT (111 aa)). One can recognise a G2M domain in the interval 2017-2126 (TTSEEVVENP…LGQTAVITSN (110 aa)). The interval 2086 to 2365 (LALGLKTLAT…IFFASFYYVW (280 aa)) is HD1. A helical membrane pass occupies residues 2197–2217 (LFTIVMWLLLLSICLGSLTYV). Residues 2218-2288 (TAVLGVCLSS…QVTISSYKLD (71 aa)) enclose the 3Ecto domain. 2 disulfides stabilise this stretch: C2234–C2262 and C2253–C2259. Transmembrane regions (helical) follow at residues 2298–2318 (WLLA…SAIM) and 2345–2365 (MAPV…YYVW). The Y1 stretch occupies residues 2366–2456 (KSYVHIMDGC…QFKRPINPTD (91 aa)). A CoV Nsp3 Y domain is found at 2366-2734 (KSYVHIMDGC…ITTKISLKGG (369 aa)). H2370, C2375, C2380, C2383, C2416, H2419, C2423, and C2426 together coordinate Zn(2+). Positions 2370 to 2383 (HIMDGCTSSTCMMC) are ZF1. A ZF2 region spans residues 2416–2426 (CKAHNWNCLNC). A Y2 region spans residues 2457 to 2551 (QSAYVVDSVT…LLDQALVSDV (95 aa)). The interval 2457 to 2734 (QSAYVVDSVT…ITTKISLKGG (278 aa)) is coV-Y. Residues 2552–2633 (GDSTEVSVKM…ECLKLSHHSD (82 aa)) form a Y3 region. The interval 2634–2734 (IEVTGDSCNN…ITTKISLKGG (101 aa)) is Y4. 7 helical membrane-spanning segments follow: residues 2744–2764 (LLKV…IMPV), 2986–3006 (PGVF…TPLV), 3016–3036 (ASVV…YYFM), 3048–3068 (VVAA…LAPA), 3071–3091 (FLPG…TNDV), 3099–3119 (WFAM…VFCI), and 3136–3156 (VMFN…TFLL). Residues 2749–3156 (LLCVLAALFC…EEAALCTFLL (408 aa)) are HD2. The region spanning 3136-3234 (VMFNGVTFST…QTSITSAVLQ (99 aa)) is the Nsp4C domain. The region spanning 3235-3540 (SGFRKMAFPS…VRQCSGVTFQ (306 aa)) is the Peptidase C30 domain. Active-site for 3CL-PRO activity residues include H3275 and C3379. 7 helical membrane passes run 3558–3578 (FLTS…FFVY), 3580–3600 (NAFL…MLLV), 3606–3626 (FLCL…MVYM), 3652–3672 (DCVM…RTVY), 3679–3698 (VWTL…GNSL), 3722–3742 (IMFL…LLFI), and 3750–3770 (IMLV…LFCL). Residues 3558–3770 (FLTSLLILVQ…CCCYFGLFCL (213 aa)) are HD3. In terms of domain architecture, RdRp Nsp7 cofactor spans 3831–3913 (SKMSDVKCTS…EMLDNRATLQ (83 aa)). Residues 3914–4111 (AIASEFSSLP…LRANSAVKLQ (198 aa)) enclose the RdRp Nsp8 cofactor domain. The Nsp9 ssRNA-binding domain maps to 4112-4224 (NNELSPVALR…GSLAATVRLQ (113 aa)). The ExoN/MTase coactivator domain occupies 4225–4363 (AGNATEVPAN…CDQLREPMMQ (139 aa)). Zn(2+) contacts are provided by C4298, C4301, H4307, C4314, C4341, C4344, C4352, and C4354. 2 zinc fingers span residues 4298-4314 (CLYC…KGFC) and 4341-4354 (CTVC…GCSC). The 255-residue stretch at 4370 to 4624 (FLNRVCGVSA…AAESHMDADL (255 aa)) folds into the NiRAN domain. Residues N4572 and D4581 each contribute to the Mn(2+) site. The Nsp12 Interface domain occupies 4629-4727 (VKWDLLKYDF…HNQDVNLHSS (99 aa)). The Zn(2+) site is built by H4658, C4664, C4669, C4673, and C4850. The region spanning 4728 to 5295 (RLSFKELLVY…AMYTPHTVLQ (568 aa)) is the Nsp12 RNA-dependent RNA polymerase domain. Positions 4730–4944 (SFKELLVYAA…HQKLLKSIAA (215 aa)) are rdRp Fingers N-ter. A rdRp Palm N-ter region spans residues 4945–4983 (TRGATVVIGTSKFYGGWHNMLKTVYSDVESPHLMGWDYP). Positions 4975–5137 (PHLMGWDYPK…CYNSNYAAQG (163 aa)) constitute a RdRp catalytic domain. A rdRp Fingers C-ter region spans residues 4984-5042 (KCDRAMPNMLRIMASLILARKHSTCCNLSHRFYRLANECAQVLSEMVMCGGSLYVKPGG). Zn(2+) is bound by residues H5005, C5008, and C5009. The segment at 5043-5178 (TSSGDATTAY…TRGPHEFCSQ (136 aa)) is rdRp Palm C-ter. Active-site residues include S5122, D5123, and D5124. A rdRp Thumb region spans residues 5179–5295 (HTMLVKQGDD…AMYTPHTVLQ (117 aa)). Positions 5296–5408 (AVGACVLCNS…TDFNAIATCD (113 aa)) constitute a CV ZBD domain. C5300, C5303, C5311, C5314, C5321, C5324, H5328, H5334, C5345, C5350, C5367, and H5370 together coordinate Zn(2+). Positions 5552–5733 (NISNEFSSNV…MKTIGPDMFL (182 aa)) constitute a (+)RNA virus helicase ATP-binding domain. 5577–5584 (GPPGTGKS) provides a ligand contact to ATP. Positions 5734 to 5903 (GTCRRCPAEI…TLQAENVTGL (170 aa)) constitute a (+)RNA virus helicase C-terminal domain. Residues 5968-6183 (MFITREEAIR…RCLAVHECFV (216 aa)) enclose the ExoN domain. Active-site residues include D5986, E5988, and E6087. Zn(2+) contacts are provided by C6103, C6106, C6122, H6125, H6153, C6157, and H6160. Active-site residues include H6164 and D6169. Zn(2+) is bound at residue C6175. Residues 6192-6423 (YPIIGDELKI…NLWNTFTKLQ (232 aa)) enclose the N7-MTase domain. 6227–6233 (DIGNPKA) is a binding site for S-adenosyl-L-methionine. A gpppA-binding region spans residues 6310-6324 (CDGGSLYVNKHAFHT). Positions 6348, 6369, 6380, and 6383 each coordinate Zn(2+). The 61-residue stretch at 6424–6484 (SLENVAYNVV…NVAFELWAKR (61 aa)) folds into the Nsp15 N-terminal oligomerization domain. Residues 6485-6610 (NIKPVPEIKI…YFKKVDGIIQ (126 aa)) form the AV-Nsp11N/CoV-Nsp15M domain. A NendoU domain is found at 6627-6766 (KPRSQMETDF…KDGHVETFYP (140 aa)). Residues H6657, H6672, K6712, K6815, D6899, K6939, and E6972 contribute to the active site. Positions 6771–7065 (SQAWQPGVAM…RVVVSSDILV (295 aa)) constitute a Nidovirus-type SAM-dependent 2'-O-MTase domain.

The protein belongs to the coronaviruses polyprotein 1ab family. Interacts with host PHB and PHB2. In terms of assembly, interacts with papain-like protease nsp3 and non-structural protein 6. As to quaternary structure, monomer. Homodimer. Only the homodimer shows catalytic activity. Interacts with nsp8 and nsp12 to form the replication-transcription complex (RTC): nsp12, nsp7, two subunits of nsp8, and up to two subunits of nsp13. In terms of assembly, interacts with nsp7, nsp13 and nsp12 to form the replication-transcription complex (RTC): nsp12, nsp7, two subunits of nsp8, and up to two subunits of nsp13. As to quaternary structure, interacts with nsp12. Interacts with proofreading exoribonuclease nsp14 and 2'-O-methyltransferase nsp16; these interactions enhance nsp14 and nsp16 enzymatic activities. In terms of assembly, interacts with nsp7 and nsp8 to form the replication-transcription complex (RTC): nsp12, nsp7, two subunits of nsp8, and up to two subunits of nsp13. Interacts with nsp9. As to quaternary structure, interacts with nsp8 to form the replication-transcription complex (RTC): nsp12, nsp7, two subunits of nsp8, and up to two subunits of nsp13. It depends on Mn(2+) as a cofactor. The cofactor is Mg(2+). In terms of processing, specific enzymatic cleavages in vivo by its own proteases yield mature proteins. 3CL-PRO and PL-PRO proteinases are autocatalytically processed.

The protein resides in the host membrane. It localises to the host cytoplasm. Its subcellular location is the host perinuclear region. It is found in the host endoplasmic reticulum-Golgi intermediate compartment. It catalyses the reaction RNA(n) + a ribonucleoside 5'-triphosphate = RNA(n+1) + diphosphate. The catalysed reaction is ATP + H2O = ADP + phosphate + H(+). It carries out the reaction Thiol-dependent hydrolysis of ester, thioester, amide, peptide and isopeptide bonds formed by the C-terminal Gly of ubiquitin (a 76-residue protein attached to proteins as an intracellular targeting signal).. The enzyme catalyses a 5'-end (N(7)-methyl 5'-triphosphoguanosine)-ribonucleoside in mRNA + S-adenosyl-L-methionine = a 5'-end (N(7)-methyl 5'-triphosphoguanosine)-(2'-O-methyl-ribonucleoside) in mRNA + S-adenosyl-L-homocysteine + H(+). It catalyses the reaction uridylyl-uridylyl-ribonucleotide-RNA = a 3'-end uridylyl-2',3'-cyclophospho-uridine-RNA + a 5'-end dephospho-ribonucleoside-RNA. The catalysed reaction is a 5'-end diphospho-ribonucleoside in mRNA + GTP + H(+) = a 5'-end (5'-triphosphoguanosine)-ribonucleoside in mRNA + diphosphate. It carries out the reaction a 5'-end (5'-triphosphoguanosine)-ribonucleoside in mRNA + S-adenosyl-L-methionine = a 5'-end (N(7)-methyl 5'-triphosphoguanosine)-ribonucleoside in mRNA + S-adenosyl-L-homocysteine. In terms of biological role, the replicase polyprotein of coronaviruses is a multifunctional protein: it contains the activities necessary for the transcription of negative stranded RNA, leader RNA, subgenomic mRNAs and progeny virion RNA as well as proteinases responsible for the cleavage of the polyprotein into functional products. Inhibits host translation by interacting with the 40S ribosomal subunit. The nsp1-40S ribosome complex further induces an endonucleolytic cleavage near the 5'UTR of host mRNAs, targeting them for degradation. Viral mRNAs are not susceptible to nsp1-mediated endonucleolytic RNA cleavage thanks to the presence of a 5'-end leader sequence and are therefore protected from degradation. By suppressing host gene expression, nsp1 facilitates efficient viral gene expression in infected cells and evasion from host immune response. Its function is as follows. May play a role in the modulation of host cell survival signaling pathway by interacting with host PHB and PHB2. Indeed, these two proteins play a role in maintaining the functional integrity of the mitochondria and protecting cells from various stresses. Functionally, responsible for the cleavages located at the N-terminus of the replicase polyprotein. In addition, PL-PRO possesses a deubiquitinating/deISGylating activity and processes both 'Lys-48'- and 'Lys-63'-linked polyubiquitin chains from cellular substrates. Participates together with nsp4 in the assembly of virally-induced cytoplasmic double-membrane vesicles necessary for viral replication. Antagonizes innate immune induction of type I interferon by blocking the phosphorylation, dimerization and subsequent nuclear translocation of host IRF3. Also prevents host NF-kappa-B signaling. In terms of biological role, participates in the assembly of virally-induced cytoplasmic double-membrane vesicles necessary for viral replication. Cleaves the C-terminus of replicase polyprotein at 11 sites. Recognizes substrates containing the core sequence [ILMVF]-Q-|-[SGACN]. Also able to bind an ADP-ribose-1''-phosphate (ADRP). Its function is as follows. Plays a role in the initial induction of autophagosomes from host endoplasmic reticulum. Later, limits the expansion of these phagosomes that are no longer able to deliver viral components to lysosomes. Functionally, forms a hexadecamer with nsp8 (8 subunits of each) that may participate in viral replication by acting as a primase. Alternatively, may synthesize substantially longer products than oligonucleotide primers. In terms of biological role, forms a hexadecamer with nsp7 (8 subunits of each) that may participate in viral replication by acting as a primase. Alternatively, may synthesize substantially longer products than oligonucleotide primers. Forms a primer, NSP9-pU, which is utilized by the polymerase for the initiation of RNA chains. Interacts with ribosome signal recognition particle RNA (SRP). Together with NSP8, suppress protein integration into the cell membrane, thereby disrupting host immune defenses. Its function is as follows. Plays a pivotal role in viral transcription by stimulating both nsp14 3'-5' exoribonuclease and nsp16 2'-O-methyltransferase activities. Therefore plays an essential role in viral mRNAs cap methylation. Functionally, RNA-directed RNA polymerase that catalyzes the transcription of viral genomic and subgenomic RNAs. Acts in complex with nsp7 and nsp8 to transcribe both the minus and positive strands of genomic RNA. The kinase-like NiRAN domain of NSP12 attaches one or more nucleotides to the amino terminus of NSP9, forming a covalent RNA-protein intermediate that serves as transcription/replication primer. Subgenomic RNAs (sgRNAs) are formed by discontinuous transcription: The polymerase has the ability to pause at transcription-regulating sequences (TRS) and jump to the leader TRS, resulting in a major deletion. This creates a series of subgenomic RNAs that are replicated, transcribed and translated. In addition, Nsp12 is a subunit of the viral RNA capping enzyme that catalyzes the RNA guanylyltransferase reaction for genomic and sub-genomic RNAs. Subsequently, the NiRAN domain transfers RNA to GDP, and forms the core cap structure GpppA-RNA. In terms of biological role, multi-functional protein with a zinc-binding domain in N-terminus displaying RNA and DNA duplex-unwinding activities with 5' to 3' polarity. Activity of helicase is dependent on magnesium. Plays a role in viral RNA synthesis through two distinct activities. The N7-guanine methyltransferase activity plays a role in the formation of the cap structure GpppA-RNA. The proofreading exoribonuclease reduces the sensitivity of the virus to RNA mutagens during replication. This activity acts on both ssRNA and dsRNA in a 3'-5' direction. Its function is as follows. Plays a role in viral transcription/replication and prevents the simultaneous activation of host cell dsRNA sensors, such as MDA5/IFIH1, OAS, and PKR. Acts by degrading the 5'-polyuridines generated during replication of the poly(A) region of viral genomic and subgenomic RNAs. Catalyzes a two-step reaction in which a 2'3'-cyclic phosphate (2'3'-cP) is first generated by 2'-O transesterification, which is then hydrolyzed to a 3'-phosphate (3'-P). If not degraded, poly(U) RNA would hybridize with poly(A) RNA tails and activate host dsRNA sensors. Functionally, methyltransferase that mediates mRNA cap 2'-O-ribose methylation to the 5'-cap structure of viral mRNAs. N7-methyl guanosine cap is a prerequisite for binding of nsp16. Therefore plays an essential role in viral mRNAs cap methylation which is essential to evade immune system. The chain is Replicase polyprotein 1ab (rep) from Bat coronavirus HKU3 (BtCoV).